A 263-amino-acid chain; its full sequence is Type III pantothenate kinase (263 aa).

14–21 (DIGNTSVN) contributes to the ATP binding site. Substrate is bound at residue 115–118 (GADR). The Proton acceptor role is filled by Asp-117. Residue Asp-137 participates in K(+) binding. Thr-140 is an ATP binding site. Thr-192 lines the substrate pocket.

The protein belongs to the type III pantothenate kinase family. In terms of assembly, homodimer. Requires NH4(+) as cofactor. K(+) serves as cofactor.

The protein localises to the cytoplasm. It catalyses the reaction (R)-pantothenate + ATP = (R)-4'-phosphopantothenate + ADP + H(+). It participates in cofactor biosynthesis; coenzyme A biosynthesis; CoA from (R)-pantothenate: step 1/5. Functionally, catalyzes the phosphorylation of pantothenate (Pan), the first step in CoA biosynthesis. This chain is Type III pantothenate kinase, found in Dehalococcoides mccartyi (strain CBDB1).